Reading from the N-terminus, the 168-residue chain is Transcriptional regulator MraZ (168 aa).

SpoVT-AbrB domains follow at residues 8 to 51 (EYNQ…GGDR) and 90 to 140 (ALNM…KADT).

It belongs to the MraZ family. As to quaternary structure, forms oligomers.

It localises to the cytoplasm. The protein localises to the nucleoid. This chain is Transcriptional regulator MraZ, found in Cereibacter sphaeroides (strain ATCC 17029 / ATH 2.4.9) (Rhodobacter sphaeroides).